The sequence spans 73 residues: ATP synthase subunit c (73 aa).

A run of 2 helical transmembrane segments spans residues 4–24 (LAIGAAIAALTGIGAGVGIGI) and 51–71 (GALAEATAIYGLLVAIMIIIF).

Belongs to the ATPase C chain family. As to quaternary structure, F-type ATPases have 2 components, F(1) - the catalytic core - and F(0) - the membrane proton channel. F(1) has five subunits: alpha(3), beta(3), gamma(1), delta(1), epsilon(1). F(0) has three main subunits: a(1), b(2) and c(10-14). The alpha and beta chains form an alternating ring which encloses part of the gamma chain. F(1) is attached to F(0) by a central stalk formed by the gamma and epsilon chains, while a peripheral stalk is formed by the delta and b chains.

The protein resides in the cell membrane. Its function is as follows. F(1)F(0) ATP synthase produces ATP from ADP in the presence of a proton or sodium gradient. F-type ATPases consist of two structural domains, F(1) containing the extramembraneous catalytic core and F(0) containing the membrane proton channel, linked together by a central stalk and a peripheral stalk. During catalysis, ATP synthesis in the catalytic domain of F(1) is coupled via a rotary mechanism of the central stalk subunits to proton translocation. Key component of the F(0) channel; it plays a direct role in translocation across the membrane. A homomeric c-ring of between 10-14 subunits forms the central stalk rotor element with the F(1) delta and epsilon subunits. This is ATP synthase subunit c from Caldanaerobacter subterraneus subsp. tengcongensis (strain DSM 15242 / JCM 11007 / NBRC 100824 / MB4) (Thermoanaerobacter tengcongensis).